Here is a 646-residue protein sequence, read N- to C-terminus: Probable lysosomal cobalamin transporter (646 aa).

A run of 5 helical transmembrane segments spans residues 11-31, 42-62, 102-122, 149-169, and 193-213; these read LIWV…VITT, IAVS…VFLL, TLYT…YFWF, LGFV…PAAG, and ALTF…ILYT. A glycan (N-linked (GlcNAc...) asparagine) is linked at Asn-297. 2 helical membrane-spanning segments follow: residues 317-337 and 380-400; these read LLGG…MLIT and ILMA…LATI. Disordered regions lie at residues 459–588 and 603–623; these read QPAA…PPRR and VGRA…DKKE. Low complexity-rich tracts occupy residues 460–490 and 517–543; these read PAAA…SPAA and PSTS…RTPR. Asn-545 carries an N-linked (GlcNAc...) asparagine glycan. Low complexity predominate over residues 565–582; sequence APAAALARPGAISPAAPR. The N-linked (GlcNAc...) asparagine glycan is linked to Asn-626.

This sequence belongs to the LIMR family. LMBRD1 subfamily.

The protein localises to the lysosome membrane. Functionally, probable lysosomal cobalamin transporter. Required to export cobalamin from lysosomes allowing its conversion to cofactors. This Chaetomium globosum (strain ATCC 6205 / CBS 148.51 / DSM 1962 / NBRC 6347 / NRRL 1970) (Soil fungus) protein is Probable lysosomal cobalamin transporter.